The following is a 514-amino-acid chain: ATP synthase subunit alpha (514 aa).

Position 170 to 177 (170 to 177) interacts with ATP; sequence GDRQIGKT.

Belongs to the ATPase alpha/beta chains family. F-type ATPases have 2 components, CF(1) - the catalytic core - and CF(0) - the membrane proton channel. CF(1) has five subunits: alpha(3), beta(3), gamma(1), delta(1), epsilon(1). CF(0) has three main subunits: a(1), b(2) and c(9-12). The alpha and beta chains form an alternating ring which encloses part of the gamma chain. CF(1) is attached to CF(0) by a central stalk formed by the gamma and epsilon chains, while a peripheral stalk is formed by the delta and b chains.

Its subcellular location is the cell inner membrane. The enzyme catalyses ATP + H2O + 4 H(+)(in) = ADP + phosphate + 5 H(+)(out). Produces ATP from ADP in the presence of a proton gradient across the membrane. The alpha chain is a regulatory subunit. This is ATP synthase subunit alpha from Pseudomonas aeruginosa (strain LESB58).